A 202-amino-acid chain; its full sequence is FMN reductase (NADH) RutF 1 (202 aa).

Residues 168–202 form a disordered region; that stretch reads PRTPRSGSAPAEPARAPRAVGARPAEGPALALRSA. Residues 171–196 are compositionally biased toward low complexity; the sequence is PRSGSAPAEPARAPRAVGARPAEGPA.

This sequence belongs to the non-flavoprotein flavin reductase family. RutF subfamily.

The enzyme catalyses FMNH2 + NAD(+) = FMN + NADH + 2 H(+). In terms of biological role, catalyzes the reduction of FMN to FMNH2 which is used to reduce pyrimidine by RutA via the Rut pathway. The protein is FMN reductase (NADH) RutF 1 of Methylorubrum extorquens (strain PA1) (Methylobacterium extorquens).